We begin with the raw amino-acid sequence, 329 residues long: Protein SPATA31F3 (329 aa).

Residues 11–31 (VGYSVYTYGSIFIIALIIWQV) form a helical membrane-spanning segment. The stretch at 58–85 (SDRATRAKRTSKEEAEKLQKLLDTMKSQ) forms a coiled coil. 3 disordered regions span residues 149–184 (ADRS…RSAT), 201–250 (QQLD…AAPT), and 288–329 (KPMT…KRNI). A phosphoserine mark is found at serine 152 and serine 153. Polar residues-rich tracts occupy residues 154 to 184 (ELTY…RSAT) and 201 to 223 (QQLD…SSTD). Residues 232-242 (QKKRKKTKKLA) are compositionally biased toward basic residues. Residues 293-320 (EPEKTHSPVRDQAEGAEKKKKPECDLKA) show a composition bias toward basic and acidic residues.

Belongs to the SPATA31 family.

It localises to the membrane. The chain is Protein SPATA31F3 from Rattus norvegicus (Rat).